The following is a 208-amino-acid chain: MAGGKRGGKVAPTKTFGRDYERSKGKISRDRVYDEEDIIKRNQESDSDDNSGSESGSENETKNNNNKSKLGSDSSDDEPVIVSRNPNAKKPAAKRPPTTKKQQESDSEDDSDKESDSEDEIANPNRMKQVTKKLSEINVNAKVELSRREKEELARQAATQRQNEKQQKSDLERLQVIRKQREEAAKRKEEEKKANEEKMAERRRLGLA.

Disordered stretches follow at residues 1 to 133 (MAGG…VTKK) and 145 to 208 (LSRR…LGLA). Residues 16–44 (FGRDYERSKGKISRDRVYDEEDIIKRNQE) are compositionally biased toward basic and acidic residues. Low complexity-rich tracts occupy residues 52 to 69 (GSES…NKSK) and 84 to 100 (RNPN…PTTK). Over residues 105-121 (SDSEDDSDKESDSEDEI) the composition is skewed to acidic residues. Residues 137–206 (INVNAKVELS…EKMAERRRLG (70 aa)) are a coiled coil. Composition is skewed to basic and acidic residues over residues 145-154 (LSRREKEELA) and 162-208 (QNEK…LGLA).

This sequence belongs to the PDAP1 family.

This chain is 28 kDa heat- and acid-stable phosphoprotein homolog, found in Dictyostelium discoideum (Social amoeba).